The sequence spans 527 residues: Bifunctional dihydrofolate reductase-thymidylate synthase (527 aa).

A DHFR domain is found at 28 to 238; the sequence is PFSVVVASDE…KKYQFEKLVP (211 aa). Val32 provides a ligand contact to substrate. NADP(+) is bound by residues Ala34 and 40–46; that span reads GIGDGGT. Asp54 provides a ligand contact to substrate. NADP(+)-binding positions include 84–86 and 105–108; these read RKT and LSRS. Substrate contacts are provided by Ile160, Tyr166, and Thr184. 161-168 is a binding site for NADP(+); the sequence is GGGTIYKQ. A thymidylate synthase region spans residues 243–527; it reads EEQYLNLVGR…YPVISMEMAV (285 aa). Arg263 provides a ligand contact to dUMP. The active site involves Cys409. Residues His410, 428 to 432, Asn440, and 470 to 472 each bind dUMP; these read QRSCD and HVY.

It in the N-terminal section; belongs to the dihydrofolate reductase family. The protein in the C-terminal section; belongs to the thymidylate synthase family. Homodimer.

It carries out the reaction dUMP + (6R)-5,10-methylene-5,6,7,8-tetrahydrofolate = 7,8-dihydrofolate + dTMP. The enzyme catalyses (6S)-5,6,7,8-tetrahydrofolate + NADP(+) = 7,8-dihydrofolate + NADPH + H(+). It functions in the pathway pyrimidine metabolism; dTTP biosynthesis. Its pathway is cofactor biosynthesis; tetrahydrofolate biosynthesis; 5,6,7,8-tetrahydrofolate from 7,8-dihydrofolate: step 1/1. In terms of biological role, bifunctional enzyme. Involved in de novo dTMP biosynthesis. Key enzyme in folate metabolism. Catalyzes an essential reaction for de novo glycine and purine synthesis, DNA precursor synthesis, and for the conversion of dUMP to dTMP. This chain is Bifunctional dihydrofolate reductase-thymidylate synthase, found in Trypanosoma brucei brucei.